A 173-amino-acid chain; its full sequence is Transcription factor E (173 aa).

In terms of domain architecture, HTH TFE/IIEalpha-type spans 3 to 88 (NNPIIQQVLL…TWRATFTKLP (86 aa)).

It belongs to the TFE family. In terms of assembly, monomer. Interaction with RNA polymerase subunits RpoF and RpoE is necessary for Tfe stimulatory transcription activity. Able to interact with Tbp and RNA polymerase in the absence of DNA promoter. Interacts both with the preinitiation and elongation complexes.

Functionally, transcription factor that plays a role in the activation of archaeal genes transcribed by RNA polymerase. Facilitates transcription initiation by enhancing TATA-box recognition by TATA-box-binding protein (Tbp), and transcription factor B (Tfb) and RNA polymerase recruitment. Not absolutely required for transcription in vitro, but particularly important in cases where Tbp or Tfb function is not optimal. It dynamically alters the nucleic acid-binding properties of RNA polymerases by stabilizing the initiation complex and destabilizing elongation complexes. Seems to translocate with the RNA polymerase following initiation and acts by binding to the non template strand of the transcription bubble in elongation complexes. In Methanococcus aeolicus (strain ATCC BAA-1280 / DSM 17508 / OCM 812 / Nankai-3), this protein is Transcription factor E.